A 467-amino-acid polypeptide reads, in one-letter code: Glutamate--tRNA ligase (467 aa).

The 'HIGH' region signature appears at 9 to 19 (PSPTGYLHIGG). Positions 237–241 (KLSKR) match the 'KMSKS' region motif. Position 240 (Lys240) interacts with ATP.

Belongs to the class-I aminoacyl-tRNA synthetase family. Glutamate--tRNA ligase type 1 subfamily. Monomer.

Its subcellular location is the cytoplasm. It carries out the reaction tRNA(Glu) + L-glutamate + ATP = L-glutamyl-tRNA(Glu) + AMP + diphosphate. Functionally, catalyzes the attachment of glutamate to tRNA(Glu) in a two-step reaction: glutamate is first activated by ATP to form Glu-AMP and then transferred to the acceptor end of tRNA(Glu). This chain is Glutamate--tRNA ligase, found in Xylella fastidiosa (strain 9a5c).